A 436-amino-acid polypeptide reads, in one-letter code: F-box/LRR-repeat protein 20 (436 aa).

The F-box domain occupies 22–68; that stretch reads AVINKKLPKELLLRIFSFLDVVTLCRCAQVSRAWNVLALDGSNWQRI. LRR repeat units follow at residues 74-100, 101-126, 127-152, 153-178, 179-204, 205-230, 231-256, 257-282, 283-308, 309-334, 335-363, 364-388, and 389-414; these read QRDIEGRVVENISKRCGGFLRKLSLRG, CLGVGDNALRTFAQNCRNIEVLNLNG, CTKTTDATCTSLSKFCSKLRHLDLAS, CTSITNMSLKALSEGCPLLEQLNISW, CDQVTKDGIQALVRGCGGLKALFLKG, CTQLEDEALKYIGAHCPELVTLNLQT, CLQITDEGLITICRGCHKLQSLCASG, CSNITDAILNALGQNCPRLRILEVAR, CSQLTDVGFTTLARNCHELEKMDLEE, CVQITDSTLIQLSIHCPRLQVLSLSH, CELITDDGIRHLGNGACAHDQLEVIELDN, CPLITDASLEHLKSCHSLERIELYD, and CQQITRAGIKRLRTHLPNIKVHAYFA. Threonine 417 is subject to Phosphothreonine. Residue serine 421 is modified to Phosphoserine.

In terms of assembly, interacts with SKP1 and CUL1.

It is found in the cytoplasm. Substrate-recognition component of the SCF (SKP1-CUL1-F-box protein)-type E3 ubiquitin ligase complex. Role in neural transmission. The protein is F-box/LRR-repeat protein 20 (FBXL20) of Bos taurus (Bovine).